The following is a 31-amino-acid chain: Cytochrome b6-f complex subunit 6 (31 aa).

Residues 4–24 (VIAYLGLLASVLIGTIVIYLG) traverse the membrane as a helical segment.

The protein belongs to the PetL family. In terms of assembly, the 4 large subunits of the cytochrome b6-f complex are cytochrome b6, subunit IV (17 kDa polypeptide, PetD), cytochrome f and the Rieske protein, while the 4 small subunits are PetG, PetL, PetM and PetN. The complex functions as a dimer.

It is found in the plastid. The protein localises to the chloroplast thylakoid membrane. Its function is as follows. Component of the cytochrome b6-f complex, which mediates electron transfer between photosystem II (PSII) and photosystem I (PSI), cyclic electron flow around PSI, and state transitions. PetL is important for photoautotrophic growth as well as for electron transfer efficiency and stability of the cytochrome b6-f complex. In Oltmannsiellopsis viridis (Marine flagellate), this protein is Cytochrome b6-f complex subunit 6.